A 520-amino-acid polypeptide reads, in one-letter code: Ribonuclease Y (520 aa).

The helical transmembrane segment at 4-24 threads the bilayer; sequence TVWILISILLATVGAVVGFFV. Residues 210-273 enclose the KH domain; it reads TVSVVNLPND…ETARIALDKL (64 aa). An HD domain is found at 336–429; that stretch reads VLKHSMEVAY…VAAADALSAA (94 aa).

This sequence belongs to the RNase Y family.

The protein resides in the cell membrane. In terms of biological role, endoribonuclease that initiates mRNA decay. This chain is Ribonuclease Y, found in Bacillus cereus (strain ZK / E33L).